Here is a 125-residue protein sequence, read N- to C-terminus: Large ribosomal subunit protein bL12 (125 aa).

The protein belongs to the bacterial ribosomal protein bL12 family. Homodimer. Part of the ribosomal stalk of the 50S ribosomal subunit. Forms a multimeric L10(L12)X complex, where L10 forms an elongated spine to which 2 to 4 L12 dimers bind in a sequential fashion. Binds GTP-bound translation factors.

In terms of biological role, forms part of the ribosomal stalk which helps the ribosome interact with GTP-bound translation factors. Is thus essential for accurate translation. This is Large ribosomal subunit protein bL12 from Cereibacter sphaeroides (Rhodobacter sphaeroides).